A 320-amino-acid chain; its full sequence is MSLITIINPLTYIVPILIAVAFLTLTERKILGYMQLRKGPNITGPYGLLQPIADGLKLFIKEPVRPLNTSPILLILSPVLALTMAMLIWTPIPMPYTLANLNLGFLSILAISSMAVNSILWAGWASNSKYALIGSLRAVAQTISYEVTLGIILLSILILTGGFTMQLLTATQKHIWLLATSWPLMMMWFISTLAETNRAPFDLTEGESELVSGFNVEYAGGPFALFFLAEYANIISMNLLTCILFINPGPTQHPELFLINLITKTMILTLTFLWIRASYPRFRYDQLMHLLWKQFLPLTMALCLLHVSLLISISGLPPLT.

8 consecutive transmembrane segments (helical) span residues 3 to 23, 72 to 92, 103 to 123, 147 to 167, 174 to 194, 226 to 246, 255 to 275, and 295 to 315; these read LITI…VAFL, ILLI…WTPI, LGFL…LWAG, VTLG…TMQL, HIWL…STLA, FFLA…ILFI, ELFL…FLWI, and FLPL…SISG.

This sequence belongs to the complex I subunit 1 family.

The protein localises to the mitochondrion inner membrane. The catalysed reaction is a ubiquinone + NADH + 5 H(+)(in) = a ubiquinol + NAD(+) + 4 H(+)(out). Its function is as follows. Core subunit of the mitochondrial membrane respiratory chain NADH dehydrogenase (Complex I) that is believed to belong to the minimal assembly required for catalysis. Complex I functions in the transfer of electrons from NADH to the respiratory chain. The immediate electron acceptor for the enzyme is believed to be ubiquinone. The protein is NADH-ubiquinone oxidoreductase chain 1 (MT-ND1) of Varanus jobiensis (Peach throat monitor).